A 338-amino-acid chain; its full sequence is L-lysine 2,3-aminomutase (338 aa).

The Radical SAM core domain occupies 107 to 330 (HKYRNRLLFM…PKLAREIAGE (224 aa)). Residues Cys-121, Cys-125, and Cys-128 each coordinate [4Fe-4S] cluster. Lys-333 is modified (N6-(pyridoxal phosphate)lysine).

It belongs to the radical SAM superfamily. KamA family. It depends on [4Fe-4S] cluster as a cofactor. Requires pyridoxal 5'-phosphate as cofactor.

The catalysed reaction is L-lysine = D-beta-lysine. In terms of biological role, with EpmA is involved in the beta-lysylation step of the post-translational modification of translation elongation factor P (EF-P) on 'Lys-34'. EpmB appears to act before EpmA. Displays lysine 2,3-aminomutase activity, producing (R)-beta-lysine from (S)-alpha-lysine (L-lysine). In Haemophilus influenzae (strain ATCC 51907 / DSM 11121 / KW20 / Rd), this protein is L-lysine 2,3-aminomutase (epmB).